Here is a 394-residue protein sequence, read N- to C-terminus: MKKKTVRDIDVSGKRVLVRVDFNVPMDENKNITDDRRIREALPTIEYLINHNAKVILVSHLGRPKGKFNPDYSLKPVAKRLSELLKKPVIMAEDVIGEDAKVKAAALKEGEVLLLENVRFHAEEEKNDPEFAKELASLADIYVNDAFGTAHRAHASTAGVAKYLPAVAGFLIEKELSIMGEALENPKRPFVAILGGAKVSDKIGVITNLLEKVDSLLIGGGMAYTFIKAKGYEIGKSLLEEDKIELAKEIMEKAKQKGVNFMLPVDTVIAKELKSGVPYEVVDIDKMPEDQIGVDIGPKTIEEYSKVIKHAMTVVWNGPMGVFEIPEFAKGTKAIAKALSECKGTTIVGGGDSAAAIEQLGYADKVTHISTGGGASLEFLEGKVLPGIDILNDK.

Substrate contacts are provided by residues 21–23, R37, 60–63, R119, and R152; these read DFN and HLGR. Residues K202, G293, E324, and 350 to 353 contribute to the ATP site; that span reads GGDS.

The protein belongs to the phosphoglycerate kinase family. Monomer.

It localises to the cytoplasm. The catalysed reaction is (2R)-3-phosphoglycerate + ATP = (2R)-3-phospho-glyceroyl phosphate + ADP. Its pathway is carbohydrate degradation; glycolysis; pyruvate from D-glyceraldehyde 3-phosphate: step 2/5. The protein is Phosphoglycerate kinase of Caldanaerobacter subterraneus subsp. tengcongensis (strain DSM 15242 / JCM 11007 / NBRC 100824 / MB4) (Thermoanaerobacter tengcongensis).